Reading from the N-terminus, the 474-residue chain is MSLQSPSRLLELAGQSLLRNQFLTIFILDELPREVFPLMFMEASSMRHFEALKLMVQAWPFLRLPLGSLMKTPHLETLQAVLKGLDTLLAQKLRPRRWKLQVLDLRDVDGNFWTIWSGARALSCSPEAMSKRQTVEDYPRTGEHQPLKVFIDLCQKESTLDECLSYLCRWIHYRRGLVHLCCNKVQNYSMPTSSFRNLLKRVYPDSIQELEIKRKCSLNKTGKFAPYLSQMSNLRKLFLAFGYDDELYVSGQQQFVPDLDCPFLCLYYPQMLYIRKISNIKEHLEHLLRCLKNPLGTFIFCHAYLADQDMECLSQYPSLSQLKELHLIHILMWTTNLEPLGALLEKVAATLEILTLKDCQIQDSQLRVLLPALSRCSQLTTFYFRGNETSTNALKDLLCHTGGLSKLGLELYPAPLECLDNRGHVNWEILAPIRAELMCTLREVRQPKRIFFGPIPCPSCGSWPSEKVDFHLCS.

The stretch at 97–124 (RWKLQVLDLRDVDGNFWTIWSGARALSC) is one LRR 1; degenerate repeat. The LRR 2; degenerate repeat unit spans residues 179-203 (HLCCNKVQNYSMPTSSFRNLLKRVY). An LRR 3; degenerate repeat occupies 204–230 (PDSIQELEIKRKCSLNKTGKFAPYLSQ). The stretch at 231-265 (MSNLRKLFLAFGYDDELYVSGQQQFVPDLDCPFLC) is one LRR 4; degenerate repeat. LRR repeat units lie at residues 266 to 291 (LYYP…LRCL), 292 to 323 (KNPL…SQLK), 324 to 342 (ELHL…PLGA), 348 to 375 (AATL…ALSR), and 376 to 400 (CSQL…LLCH).

Belongs to the PRAME family.

This chain is PRAME family member 17, found in Homo sapiens (Human).